The sequence spans 142 residues: Putative pre-16S rRNA nuclease (142 aa).

The protein belongs to the YqgF nuclease family.

The protein resides in the cytoplasm. Functionally, could be a nuclease involved in processing of the 5'-end of pre-16S rRNA. This Nitratidesulfovibrio vulgaris (strain DSM 19637 / Miyazaki F) (Desulfovibrio vulgaris) protein is Putative pre-16S rRNA nuclease.